The following is a 579-amino-acid chain: Peroxisomal membrane protein PEX28 (579 aa).

At 1–243 (MSETSSSRRS…TWRNPTGTVT (243 aa)) the chain is on the cytoplasmic side. The segment at 40 to 70 (KSPTVAEDLSGSSSSGNSEMSHPSLTASSAT) is disordered. The span at 49-63 (SGSSSSGNSEMSHPS) shows a compositional bias: low complexity. Residues 244–264 (SLILFTLICFNPMYLVILPIF) traverse the membrane as a helical segment. Residues 265-392 (RFVYGIVVPG…FQNEECSTKR (128 aa)) lie on the Peroxisomal side of the membrane. An N-linked (GlcNAc...) asparagine glycan is attached at Asn-361. The chain crosses the membrane as a helical span at residues 393–413 (FFTGFLLIVFLKILSPFVNWS). Topologically, residues 414–579 (YVCSIFAWCL…RVIKNATPVA (166 aa)) are cytoplasmic.

It belongs to the PEX28-32 family. Peroxin-28 subfamily.

It is found in the peroxisome membrane. Its function is as follows. Involved in the regulation of peroxisome number, size and distribution. This is Peroxisomal membrane protein PEX28 (PEX28) from Saccharomyces cerevisiae (strain ATCC 204508 / S288c) (Baker's yeast).